The primary structure comprises 272 residues: Regulatory protein RecX (272 aa).

This sequence belongs to the RecX family.

Its subcellular location is the cytoplasm. Functionally, modulates RecA activity. This is Regulatory protein RecX from Staphylococcus saprophyticus subsp. saprophyticus (strain ATCC 15305 / DSM 20229 / NCIMB 8711 / NCTC 7292 / S-41).